The sequence spans 363 residues: Glyceraldehyde-3-phosphate dehydrogenase, muscle (363 aa).

Positions Met1–Ser176 are interaction with WARS. Lys3 bears the N6,N6-dimethyllysine mark. Residue Asn7 is modified to Deamidated asparagine. Residues Arg11–Ile12 and Asp33 each bind NAD(+). Phosphotyrosine is present on Tyr70. N6-acetyllysine is present on Lys89. Asn92 bears the Deamidated asparagine mark. Lys94 is subject to N6,N6-dimethyllysine. At Asn98 the chain carries Deamidated asparagine. Thr103 is subject to Phosphothreonine. Arg108 and Ser150 together coordinate NAD(+). A phosphoserine mark is found at Ser150 and Ser176. Residue Asn177 is modified to Deamidated asparagine. Phosphoserine is present on Ser179. Ser179 to Thr181 contributes to the D-glyceraldehyde 3-phosphate binding site. Cys180 acts as the Nucleophile in catalysis. ADP-ribosylcysteine; by autocatalysis; in irreversibly inhibited form is present on Cys180. Residue Cys180 is modified to Cysteine persulfide. Cys180 is modified (S-(2-succinyl)cysteine). Cys180 carries the post-translational modification S-nitrosocysteine; in reversibly inhibited form. Thr181 bears the Phosphothreonine mark. Asn183 bears the Deamidated asparagine mark. Residues Thr205, Thr210, and Thr212 each carry the phosphothreonine modification. Thr210 provides a ligand contact to D-glyceraldehyde 3-phosphate. Residue Lys214 forms a Glycyl lysine isopeptide (Lys-Gly) (interchain with G-Cter in SUMO2) linkage. Lys222 carries the post-translational modification N6,N6-dimethyllysine; alternate. Lys222 carries the post-translational modification N6-acetyllysine; alternate. Lys222 bears the N6-malonyllysine; alternate mark. At Thr239 the chain carries Phosphothreonine. D-glyceraldehyde 3-phosphate is bound at residue Thr239–Gly240. At Lys243 the chain carries N6,N6-dimethyllysine; alternate. At Lys243 the chain carries N6-malonyllysine; alternate. Lys247 carries the N6-acetyllysine modification. Asn253 is modified (deamidated asparagine). Lys255 bears the N6,N6-dimethyllysine; alternate mark. Lys255 carries the post-translational modification N6-acetyllysine; alternate. A Phosphothreonine modification is found at Thr257. Arg262 provides a ligand contact to D-glyceraldehyde 3-phosphate. Thr265 is subject to Phosphothreonine. At Ser269 the chain carries Phosphoserine. Cys275 bears the S-(2-succinyl)cysteine mark. At Cys275 the chain carries S-nitrosocysteine. Lys282 carries the N6-acetyllysine modification. The residue at position 291 (Lys291) is an N6,N6-dimethyllysine. Residue Ser340 is modified to Phosphoserine. Asn344 bears the Deamidated asparagine mark. Residue Asn344 participates in NAD(+) binding. Position 361 is a phosphoserine (Ser361). Lys362 is modified (N6,N6-dimethyllysine).

This sequence belongs to the glyceraldehyde-3-phosphate dehydrogenase family. Homotetramer. Interacts with TPPP; the interaction is direct. Interacts (when S-nitrosylated) with SIAH1; leading to nuclear translocation. Interacts with RILPL1/GOSPEL, leading to prevent the interaction between GAPDH and SIAH1 and prevent nuclear translocation. Interacts with CHP1; the interaction increases the binding of CHP1 with microtubules. Associates with microtubules. Interacts with EIF1AD, USP25, PRKCI and WARS1. Interacts with phosphorylated RPL13A; inhibited by oxidatively-modified low-densitity lipoprotein (LDL(ox)). Component of the GAIT complex. Interacts with FKBP6; leading to inhibit GAPDH catalytic activity. Interacts with TRAF2, promoting TRAF2 ubiquitination. Interacts with TRAF3, promoting TRAF3 ubiquitination. Post-translationally, ISGylated. S-nitrosylation of Cys-180 leads to interaction with SIAH1, followed by translocation to the nucleus S-nitrosylation of Cys-275 is induced by interferon-gamma and LDL(ox) implicating the iNOS-S100A8/9 transnitrosylase complex and seems to prevent interaction with phosphorylated RPL13A and to interfere with GAIT complex activity. In terms of processing, sulfhydration at Cys-180 increases catalytic activity.

Its subcellular location is the cytoplasm. It is found in the cytosol. It localises to the cytoskeleton. The protein localises to the nucleus. The enzyme catalyses D-glyceraldehyde 3-phosphate + phosphate + NAD(+) = (2R)-3-phospho-glyceroyl phosphate + NADH + H(+). It carries out the reaction S-nitroso-L-cysteinyl-[GAPDH] + L-cysteinyl-[protein] = L-cysteinyl-[GAPDH] + S-nitroso-L-cysteinyl-[protein]. It participates in carbohydrate degradation; glycolysis; pyruvate from D-glyceraldehyde 3-phosphate: step 1/5. Its activity is regulated as follows. Glyceraldehyde-3-phosphate dehydrogenase activity is inhibited by fumarate, via the formation of S-(2-succinyl)cysteine residues. Its function is as follows. Has both glyceraldehyde-3-phosphate dehydrogenase and nitrosylase activities, thereby playing a role in glycolysis and nuclear functions, respectively. Glyceraldehyde-3-phosphate dehydrogenase is a key enzyme in glycolysis that catalyzes the first step of the pathway by converting D-glyceraldehyde 3-phosphate (G3P) into 3-phospho-D-glyceroyl phosphate. Modulates the organization and assembly of the cytoskeleton. Facilitates the CHP1-dependent microtubule and membrane associations through its ability to stimulate the binding of CHP1 to microtubules. Component of the GAIT (gamma interferon-activated inhibitor of translation) complex which mediates interferon-gamma-induced transcript-selective translation inhibition in inflammation processes. Upon interferon-gamma treatment assembles into the GAIT complex which binds to stem loop-containing GAIT elements in the 3'-UTR of diverse inflammatory mRNAs (such as ceruplasmin) and suppresses their translation. Also plays a role in innate immunity by promoting TNF-induced NF-kappa-B activation and type I interferon production, via interaction with TRAF2 and TRAF3, respectively. Participates in nuclear events including transcription, RNA transport, DNA replication and apoptosis. Nuclear functions are probably due to the nitrosylase activity that mediates cysteine S-nitrosylation of nuclear target proteins such as SIRT1, HDAC2 and PRKDC. This chain is Glyceraldehyde-3-phosphate dehydrogenase, muscle, found in Jaculus orientalis (Greater Egyptian jerboa).